The sequence spans 166 residues: Putative pre-16S rRNA nuclease (166 aa).

It belongs to the YqgF nuclease family.

The protein resides in the cytoplasm. Its function is as follows. Could be a nuclease involved in processing of the 5'-end of pre-16S rRNA. In Mesorhizobium japonicum (strain LMG 29417 / CECT 9101 / MAFF 303099) (Mesorhizobium loti (strain MAFF 303099)), this protein is Putative pre-16S rRNA nuclease.